The chain runs to 394 residues: Xylose isomerase (394 aa).

Residues histidine 54 and aspartate 57 contribute to the active site. Mg(2+) is bound by residues glutamate 181, glutamate 217, histidine 220, aspartate 245, aspartate 255, aspartate 257, and aspartate 292.

This sequence belongs to the xylose isomerase family. Homotetramer. Mg(2+) serves as cofactor.

The protein resides in the cytoplasm. It carries out the reaction alpha-D-xylose = alpha-D-xylulofuranose. This is Xylose isomerase (xylA) from Actinoplanes sp. (strain ATCC 31351 / 3876) (Ampullariella sp.).